A 414-amino-acid polypeptide reads, in one-letter code: CCA-adding enzyme (414 aa).

Residues Gly-8 and Arg-11 each contribute to the ATP site. CTP is bound by residues Gly-8 and Arg-11. Asp-21 and Asp-23 together coordinate Mg(2+). ATP is bound by residues Arg-91, Arg-137, and Arg-140. Positions 91, 137, and 140 each coordinate CTP.

The protein belongs to the tRNA nucleotidyltransferase/poly(A) polymerase family. Bacterial CCA-adding enzyme type 2 subfamily. It depends on Mg(2+) as a cofactor.

The enzyme catalyses a tRNA precursor + 2 CTP + ATP = a tRNA with a 3' CCA end + 3 diphosphate. It carries out the reaction a tRNA with a 3' CCA end + 2 CTP + ATP = a tRNA with a 3' CCACCA end + 3 diphosphate. In terms of biological role, catalyzes the addition and repair of the essential 3'-terminal CCA sequence in tRNAs without using a nucleic acid template. Adds these three nucleotides in the order of C, C, and A to the tRNA nucleotide-73, using CTP and ATP as substrates and producing inorganic pyrophosphate. tRNA 3'-terminal CCA addition is required both for tRNA processing and repair. Also involved in tRNA surveillance by mediating tandem CCA addition to generate a CCACCA at the 3' terminus of unstable tRNAs. While stable tRNAs receive only 3'-terminal CCA, unstable tRNAs are marked with CCACCA and rapidly degraded. This is CCA-adding enzyme from Buchnera aphidicola subsp. Acyrthosiphon pisum (strain 5A).